We begin with the raw amino-acid sequence, 290 residues long: 2-hydroxy-6-oxo-6-(2'-aminophenyl)hexa-2,4-dienoic acid hydrolase (290 aa).

Active-site residues include S114, D233, and H261.

The protein belongs to the DmpD/TodF/XylF esterase family. As to quaternary structure, homodimer.

It carries out the reaction (2E,4E)-6-(2-aminophenyl)-2-hydroxy-6-oxohexa-2,4-dienoate + H2O = (2E)-2-hydroxypenta-2,4-dienoate + anthranilate + H(+). It functions in the pathway xenobiotic degradation; carbazole degradation. Its function is as follows. Involved in the degradation of carbazole, a toxic N-heterocyclic aromatic compound containing dibenzopyrrole system. Catalyzes the hydrolytic cleavage of a carbon-carbon bond of 2-hydroxy-6-oxo-6-(2'-aminophenyl)hexa-2,4-dienoic acid (HOPDA) to yield anthranilate. CarC is specific for 2-hydroxy-6-oxo-6-phenylhexa-2,4-dienoic acid (6-phenyl-HODA), and has little activity toward 2-hydroxy-6-oxohepta-2,4-dienoic acid and 2-hydroxymuconic semialdehyde. The effect of the presence of an amino group or hydroxyl group at the 2'-position of phenyl moiety of 6-phenyl-HODA on the enzyme activity is found to be small. In Metapseudomonas resinovorans (Pseudomonas resinovorans), this protein is 2-hydroxy-6-oxo-6-(2'-aminophenyl)hexa-2,4-dienoic acid hydrolase (carC).